A 375-amino-acid chain; its full sequence is DNA replication and repair protein RecF (375 aa).

30–37 is a binding site for ATP; sequence GENAQGKT.

The protein belongs to the RecF family.

The protein resides in the cytoplasm. The RecF protein is involved in DNA metabolism; it is required for DNA replication and normal SOS inducibility. RecF binds preferentially to single-stranded, linear DNA. It also seems to bind ATP. This is DNA replication and repair protein RecF from Bacillus cereus (strain B4264).